Consider the following 670-residue polypeptide: DNA ligase (670 aa).

NAD(+)-binding positions include 34–38, 84–85, 116–119, arginine 139, glutamate 174, tyrosine 226, lysine 291, and lysine 315; these read DAEYD, SL, and EHKV. Residue lysine 118 is the N6-AMP-lysine intermediate of the active site. Cysteine 409, cysteine 412, cysteine 425, and cysteine 430 together coordinate Zn(2+). The BRCT domain maps to 586–670; sequence EVSDLLSGLT…LKEKGAPVPA (85 aa).

The protein belongs to the NAD-dependent DNA ligase family. LigA subfamily. The cofactor is Mg(2+).

The catalysed reaction is NAD(+) + (deoxyribonucleotide)n-3'-hydroxyl + 5'-phospho-(deoxyribonucleotide)m = (deoxyribonucleotide)n+m + AMP + beta-nicotinamide D-nucleotide.. Functionally, DNA ligase that catalyzes the formation of phosphodiester linkages between 5'-phosphoryl and 3'-hydroxyl groups in double-stranded DNA using NAD as a coenzyme and as the energy source for the reaction. It is essential for DNA replication and repair of damaged DNA. In Thermus filiformis, this protein is DNA ligase.